Here is a 657-residue protein sequence, read N- to C-terminus: Protein translocase subunit SecA 2 (657 aa).

Residues Gln-93, 111 to 115 (GEGKT), and Asp-531 each bind ATP.

This sequence belongs to the SecA family. Monomer and homodimer. Part of the essential Sec protein translocation apparatus which comprises SecA, SecYEG and auxiliary proteins SecDF. Other proteins may also be involved.

The protein localises to the cell inner membrane. Its subcellular location is the cytoplasm. It catalyses the reaction ATP + H2O + cellular proteinSide 1 = ADP + phosphate + cellular proteinSide 2.. Functionally, part of the Sec protein translocase complex. Interacts with the SecYEG preprotein conducting channel. Has a central role in coupling the hydrolysis of ATP to the transfer of proteins into and across the cell membrane, serving as an ATP-driven molecular motor driving the stepwise translocation of polypeptide chains across the membrane. This is Protein translocase subunit SecA 2 from Rhodopirellula baltica (strain DSM 10527 / NCIMB 13988 / SH1).